The primary structure comprises 209 residues: tRNA (guanine-N(7)-)-methyltransferase (209 aa).

4 residues coordinate S-adenosyl-L-methionine: D35, E60, N87, and D113. D113 is a catalytic residue. Residues K117 and D149 each contribute to the substrate site.

It belongs to the class I-like SAM-binding methyltransferase superfamily. TrmB family.

The enzyme catalyses guanosine(46) in tRNA + S-adenosyl-L-methionine = N(7)-methylguanosine(46) in tRNA + S-adenosyl-L-homocysteine. It functions in the pathway tRNA modification; N(7)-methylguanine-tRNA biosynthesis. Functionally, catalyzes the formation of N(7)-methylguanine at position 46 (m7G46) in tRNA. The protein is tRNA (guanine-N(7)-)-methyltransferase of Prochlorococcus marinus (strain MIT 9515).